The sequence spans 151 residues: Ribosome maturation factor RimP (151 aa).

It belongs to the RimP family.

It is found in the cytoplasm. In terms of biological role, required for maturation of 30S ribosomal subunits. The sequence is that of Ribosome maturation factor RimP from Caldicellulosiruptor bescii (strain ATCC BAA-1888 / DSM 6725 / KCTC 15123 / Z-1320) (Anaerocellum thermophilum).